Consider the following 890-residue polypeptide: Tyrosine-protein kinase receptor TYRO3 (890 aa).

The signal sequence occupies residues 1–40; the sequence is MALRRSMGRPGLPPLPLPPPPRLGLLLAALASLLLPESAA. Ig-like C2-type domains follow at residues 41–128 and 139–220; these read AGLK…TEIS and PFFT…ATVH. Topologically, residues 41–429 are extracellular; that stretch reads AGLKLMGAPV…QGPPHSRTSW (389 aa). The N-linked (GlcNAc...) asparagine glycan is linked to asparagine 63. 2 cysteine pairs are disulfide-bonded: cysteine 64–cysteine 117 and cysteine 160–cysteine 203. N-linked (GlcNAc...) asparagine glycosylation is found at asparagine 191, asparagine 230, asparagine 240, asparagine 293, asparagine 366, and asparagine 380. Fibronectin type-III domains lie at 227–320 and 325–416; these read APFN…TKGL and APQN…SHDR. The helical transmembrane segment at 430–450 threads the bilayer; sequence VPVVLGVLTALVTAAALALIL. At 451-890 the chain is on the cytoplasmic side; that stretch reads LRKRRKETRF…QQGLLPHSSC (440 aa). Serine 466 is subject to Phosphoserine. The Protein kinase domain occupies 518–790; sequence FTLGRMLGKG…CLRMELENIL (273 aa). ATP contacts are provided by residues 524–532 and lysine 550; that span reads LGKGEFGSV. Catalysis depends on aspartate 655, which acts as the Proton acceptor. A phosphotyrosine; by autocatalysis mark is found at tyrosine 681, tyrosine 685, tyrosine 686, and tyrosine 804. 2 disordered regions span residues 815–837 and 851–871; these read AGGS…GSGM and LTPG…ESPL. 2 positions are modified to phosphoserine: serine 818 and serine 869.

This sequence belongs to the protein kinase superfamily. Tyr protein kinase family. AXL/UFO subfamily. In terms of assembly, monomer and homodimer. Interacts (via N-terminus) with extracellular ligands TULP1 and GAS6. Interacts with PIK3R1; this interaction increases PI3-kinase activity. Post-translationally, autophosphorylated. As to expression, abundant in the brain and lower levels in other tissues.

It localises to the cell membrane. The catalysed reaction is L-tyrosyl-[protein] + ATP = O-phospho-L-tyrosyl-[protein] + ADP + H(+). Its function is as follows. Receptor tyrosine kinase that transduces signals from the extracellular matrix into the cytoplasm by binding to several ligands including TULP1 or GAS6. Regulates many physiological processes including cell survival, migration and differentiation. Ligand binding at the cell surface induces dimerization and autophosphorylation of TYRO3 on its intracellular domain that provides docking sites for downstream signaling molecules. Following activation by ligand, interacts with PIK3R1 and thereby enhances PI3-kinase activity. Activates the AKT survival pathway, including nuclear translocation of NF-kappa-B and up-regulation of transcription of NF-kappa-B-regulated genes. TYRO3 signaling plays a role in various processes such as neuron protection from excitotoxic injury, platelet aggregation and cytoskeleton reorganization. Also plays an important role in inhibition of Toll-like receptors (TLRs)-mediated innate immune response by activating STAT1, which selectively induces production of suppressors of cytokine signaling SOCS1 and SOCS3. Functionally, (Microbial infection) Acts as a receptor for lassa virus and lymphocytic choriomeningitis virus, possibly through GAS6 binding to phosphatidyl-serine at the surface of virion envelope. (Microbial infection) Acts as a receptor for Ebolavirus, possibly through GAS6 binding to phosphatidyl-serine at the surface of virion envelope. This chain is Tyrosine-protein kinase receptor TYRO3 (TYRO3), found in Homo sapiens (Human).